The chain runs to 884 residues: Kinesin-like protein KIN-7C (884 aa).

The region spanning 33–355 (RIQVLVRLRP…LLFGSCAKEV (323 aa)) is the Kinesin motor domain. ATP is bound at residue 119–126 (GQTSSGKT). Residues 364-435 (VMSDKALVKH…LQDLLQSVGD (72 aa)) adopt a coiled-coil conformation. The interval 434–530 (GDHDLNRQVQ…VNSRHSRPSG (97 aa)) is disordered. Residues 449 to 460 (RSPPSVGMPPSV) show a composition bias toward low complexity. Over residues 461–483 (SRDDSSQVSHDDSDLYKEVRCIE) the composition is skewed to basic and acidic residues. Positions 498–523 (GESSSPQDSNMNSGLHGNDSNASVNS) are enriched in polar residues.

This sequence belongs to the TRAFAC class myosin-kinesin ATPase superfamily. Kinesin family. KIN-7 subfamily.

The polypeptide is Kinesin-like protein KIN-7C (Oryza sativa subsp. japonica (Rice)).